The primary structure comprises 430 residues: MSVIELVYAREVLDSRGNPTVEVEVVLEDGAMGRAIVPSGASTGAFEAVELRDGDKGRYLGKGVETAVANVNEIIAPEIEGMDAFDQPAIDAIMIELDGTPNKGKLGANAILGVSMAVARAAADEIGLPLFQYLGGVNAKQLPVPMMNILNGGEHADNNVDVQEFMILPVGACCFKEGLRMGAEVFHSLKKVLGEKGLACGVGDEGGFAPNLGSNREALELIVEAITKAGYKPGEDVMLGLDVAATEMYNKETKKYVLAGEGKELTAAEMVALYEDWSNNFPIITIEDGLDEEDWDGWKLLTEKLGNKLQLVGDDLFVTNTERLEKGIENGVANSILVKVNQIGTITETLDAIEMAKRAGYTAVISHRSGETEDSTIADLAVAVNAGQIKTGAPSRTDRVAKYNQLLRIEEMVGEQARYCGLKSFYNLKK.

Q163 lines the (2R)-2-phosphoglycerate pocket. E205 (proton donor) is an active-site residue. Mg(2+) is bound by residues D242, E287, and D314. Residues K339, R368, S369, and K390 each coordinate (2R)-2-phosphoglycerate. The active-site Proton acceptor is K339.

Belongs to the enolase family. The cofactor is Mg(2+).

It localises to the cytoplasm. It is found in the secreted. Its subcellular location is the cell surface. It catalyses the reaction (2R)-2-phosphoglycerate = phosphoenolpyruvate + H2O. Its pathway is carbohydrate degradation; glycolysis; pyruvate from D-glyceraldehyde 3-phosphate: step 4/5. Functionally, catalyzes the reversible conversion of 2-phosphoglycerate (2-PG) into phosphoenolpyruvate (PEP). It is essential for the degradation of carbohydrates via glycolysis. This Clostridioides difficile (strain 630) (Peptoclostridium difficile) protein is Enolase.